Here is a 710-residue protein sequence, read N- to C-terminus: uncharacterized protein (710 aa).

The segment at Met1–Glu20 is disordered. Residues Ser13–Glu42 adopt a coiled-coil conformation.

It belongs to the IIV-6 268L family.

This is an uncharacterized protein from Invertebrate iridescent virus 6 (IIV-6).